A 370-amino-acid chain; its full sequence is Cytochrome b (370 aa).

Helical transmembrane passes span 25–45, 69–90, 105–125, and 170–190; these read FGSM…FLAV, WMMQ…YIHI, WFSG…GYVL, and FFAL…LHIL. Residues His-75 and His-89 each contribute to the heme b site. Heme b is bound by residues His-174 and His-188. An a ubiquinone-binding site is contributed by His-193. 4 helical membrane passes run 218–238, 280–300, 312–332, and 339–358; these read YKDM…VSFF, LGGA…PFTH, FMQL…WTAT, and FTTI…ISNP.

This sequence belongs to the cytochrome b family. In terms of assembly, the cytochrome bc1 complex contains 3 respiratory subunits (MT-CYB, CYC1 and UQCRFS1), 2 core proteins (UQCRC1 and UQCRC2) and probably 6 low-molecular weight proteins. It depends on heme b as a cofactor.

The protein resides in the mitochondrion inner membrane. Its function is as follows. Component of the ubiquinol-cytochrome c reductase complex (complex III or cytochrome b-c1 complex) that is part of the mitochondrial respiratory chain. The b-c1 complex mediates electron transfer from ubiquinol to cytochrome c. Contributes to the generation of a proton gradient across the mitochondrial membrane that is then used for ATP synthesis. This is Cytochrome b (MT-CYB) from Chilabothrus strigilatus mccraniei (Ragged Island boa constrictor).